A 375-amino-acid chain; its full sequence is 23S rRNA (uracil(747)-C(5))-methyltransferase RlmC (375 aa).

Positions 3, 11, 14, and 87 each coordinate [4Fe-4S] cluster. S-adenosyl-L-methionine contacts are provided by Gln-212, Phe-241, Glu-262, and Asn-307. Cys-334 acts as the Nucleophile in catalysis.

It belongs to the class I-like SAM-binding methyltransferase superfamily. RNA M5U methyltransferase family. RlmC subfamily.

It carries out the reaction uridine(747) in 23S rRNA + S-adenosyl-L-methionine = 5-methyluridine(747) in 23S rRNA + S-adenosyl-L-homocysteine + H(+). Its function is as follows. Catalyzes the formation of 5-methyl-uridine at position 747 (m5U747) in 23S rRNA. This is 23S rRNA (uracil(747)-C(5))-methyltransferase RlmC from Shigella flexneri serotype 5b (strain 8401).